A 344-amino-acid chain; its full sequence is Fibronectin type 3 and ankyrin repeat domains 1 protein (344 aa).

One can recognise a Fibronectin type-III domain in the interval 11–108 (KPHPPVVGKV…VVSVATTREP (98 aa)). ANK repeat units follow at residues 109–139 (ISSE…MIDV), 143–172 (FGFT…DVNL), 176–205 (SGKD…SWEA), 209–238 (GGCT…EVDV), 243–273 (SGWT…DVNI), and 277–306 (DGKT…DATV).

As to quaternary structure, interacts with COPS5; regulates the phosphorylation of JUN and the transcriptional activity of AP-1. Interacts with RYBP; may prevent the ubiquitin-mediated proteasomal degradation of FANK1. Polyubiquitinated. Polyubiquitination leads to proteasomal degradation. In terms of tissue distribution, mostly restricted to testis (at protein level), including mid to late pachytene spermatocytes (stages VI-X), diplotene spermatocytes (stage XI), meiotically dividing spermatocytes (stage XII) and spermatids in steps 1-14. Highest levels in late pachytene spermatocytes and spermatids in steps 1-9.

Its subcellular location is the nucleus. The protein localises to the cytoplasm. The protein resides in the cytosol. It is found in the cytoskeleton. It localises to the cilium basal body. Its subcellular location is the cell projection. The protein localises to the cilium. Its function is as follows. Through the activation of JUN and AP-1-mediated transcription, may regulate apoptosis. This Mus musculus (Mouse) protein is Fibronectin type 3 and ankyrin repeat domains 1 protein.